The chain runs to 1128 residues: Lysylphosphatidylglycerol biosynthesis bifunctional protein LysX (1128 aa).

The tract at residues 1-47 is disordered; the sequence is MDNPPPTGVAPRHLPPGSVHTGKVTASLSHRRPDSVQDAPPAPVPHR. A phosphatidylglycerol lysyltransferase region spans residues 1-632; the sequence is MDNPPPTGVA…GLHADGSPPD (632 aa). 6 helical membrane-spanning segments follow: residues 55-75, 97-117, 121-141, 147-167, 184-204, and 240-260; these read VPHIAGLVLGVFAVACLLWSL, APDTNVMWALIVGLLAGAIAS, IAWWLLVGYLTLFAVANGLRF, INALVAMIVQVGVVGLLIAAW, GVLVGGLAIGCLLGWGLVEVF, and FVNVLLGLFGAIALLAAVLTL. The interval 619 to 644 is disordered; it reads DTLTGLHADGSPPDWPKPDLLDSGPR. Positions 633-1128 are lysine--tRNA ligase; the sequence is WPKPDLLDSG…TLPFPLVKPR (496 aa). The segment covering 634–644 has biased composition (basic and acidic residues); the sequence is PKPDLLDSGPR. Asp-1040 and Glu-1047 together coordinate Mg(2+).

This sequence in the N-terminal section; belongs to the LPG synthetase family. The protein in the C-terminal section; belongs to the class-II aminoacyl-tRNA synthetase family. The cofactor is Mg(2+).

It is found in the cell membrane. The enzyme catalyses tRNA(Lys) + L-lysine + ATP = L-lysyl-tRNA(Lys) + AMP + diphosphate. It carries out the reaction L-lysyl-tRNA(Lys) + a 1,2-diacyl-sn-glycero-3-phospho-(1'-sn-glycerol) = a 1,2-diacyl-sn-glycero-3-phospho-1'-(3'-O-L-lysyl)-sn-glycerol + tRNA(Lys). Catalyzes the production of L-lysyl-tRNA(Lys)transfer and the transfer of a lysyl group from L-lysyl-tRNA(Lys) to membrane-bound phosphatidylglycerol (PG), which produces lysylphosphatidylglycerol (LPG), one of the components of the bacterial membrane with a positive net charge. LPG synthesis contributes to the resistance to cationic antimicrobial peptides (CAMPs) and likely protects M.tuberculosis against the CAMPs produced by competiting microorganisms (bacteriocins). In fact, the modification of anionic phosphatidylglycerol with positively charged L-lysine results in repulsion of the peptides. The protein is Lysylphosphatidylglycerol biosynthesis bifunctional protein LysX (lysX) of Nocardia farcinica (strain IFM 10152).